Reading from the N-terminus, the 190-residue chain is Adenine phosphoribosyltransferase (190 aa).

The protein belongs to the purine/pyrimidine phosphoribosyltransferase family. In terms of assembly, homodimer.

The protein resides in the cytoplasm. The catalysed reaction is AMP + diphosphate = 5-phospho-alpha-D-ribose 1-diphosphate + adenine. It functions in the pathway purine metabolism; AMP biosynthesis via salvage pathway; AMP from adenine: step 1/1. Functionally, catalyzes a salvage reaction resulting in the formation of AMP, that is energically less costly than de novo synthesis. This chain is Adenine phosphoribosyltransferase, found in Treponema denticola (strain ATCC 35405 / DSM 14222 / CIP 103919 / JCM 8153 / KCTC 15104).